A 149-amino-acid chain; its full sequence is Calmodulin (149 aa).

Alanine 2 carries the post-translational modification N-acetylalanine. 4 EF-hand domains span residues 8–43 (EQIAEFKEAFSLFDKDGDGTITTKELGTVMRSLGQN), 44–79 (PTEAELQDMINEVDADGNGTIDFPEFLTMMARKMKD), 81–116 (DSEEEIIEAFKVFDKDGNGFISAAELRHIMTNLGEK), and 117–149 (LTDEEVDEMIREADIDGDGQINYEEFVKMMMAK). Residues aspartate 21, aspartate 23, aspartate 25, threonine 27, glutamate 32, aspartate 57, aspartate 59, asparagine 61, threonine 63, glutamate 68, aspartate 94, aspartate 96, asparagine 98, and glutamate 105 each contribute to the Ca(2+) site. Lysine 116 is modified (N6,N6,N6-trimethyllysine). Residues aspartate 130, aspartate 132, aspartate 134, glutamine 136, and glutamate 141 each coordinate Ca(2+).

Belongs to the calmodulin family.

Its function is as follows. Calmodulin mediates the control of a large number of enzymes, ion channels and other proteins by Ca(2+). Among the enzymes to be stimulated by the calmodulin-Ca(2+) complex are a number of protein kinases and phosphatases. The polypeptide is Calmodulin (Macrocystis pyrifera (Giant kelp)).